Here is a 247-residue protein sequence, read N- to C-terminus: Adenosylcobinamide-GDP ribazoletransferase (247 aa).

5 consecutive transmembrane segments (helical) span residues Ile34 to Val54, Cys59 to Phe79, Gly113 to Leu133, Ile138 to Tyr158, and Val194 to Ile214.

Belongs to the CobS family. The cofactor is Mg(2+).

Its subcellular location is the cell inner membrane. The catalysed reaction is alpha-ribazole + adenosylcob(III)inamide-GDP = adenosylcob(III)alamin + GMP + H(+). The enzyme catalyses alpha-ribazole 5'-phosphate + adenosylcob(III)inamide-GDP = adenosylcob(III)alamin 5'-phosphate + GMP + H(+). It functions in the pathway cofactor biosynthesis; adenosylcobalamin biosynthesis; adenosylcobalamin from cob(II)yrinate a,c-diamide: step 7/7. Functionally, joins adenosylcobinamide-GDP and alpha-ribazole to generate adenosylcobalamin (Ado-cobalamin). Also synthesizes adenosylcobalamin 5'-phosphate from adenosylcobinamide-GDP and alpha-ribazole 5'-phosphate. This is Adenosylcobinamide-GDP ribazoletransferase from Escherichia coli O45:K1 (strain S88 / ExPEC).